The sequence spans 182 residues: MDRKTLDDTSRFLSHVLRHQPEAIGLTLDGEGWADIDALIAGAARDGRALDRALLGAVLRSNDKQRFAFSADGQRIRAVQGHSHAAVAIAYAPAVPPAVLYHGTARRFLDSIREHGLVPGSRHHVHLSARRATALEVGRRYGSPVLLEVDARDMHLAGHLFHQAENGVWLAGQVPVRFIREA.

This sequence belongs to the KptA/TPT1 family.

Its function is as follows. Removes the 2'-phosphate from RNA via an intermediate in which the phosphate is ADP-ribosylated by NAD followed by a presumed transesterification to release the RNA and generate ADP-ribose 1''-2''-cyclic phosphate (APPR&gt;P). May function as an ADP-ribosylase. In Pseudomonas paraeruginosa (strain DSM 24068 / PA7) (Pseudomonas aeruginosa (strain PA7)), this protein is Probable RNA 2'-phosphotransferase.